The following is a 274-amino-acid chain: Nitrogenase iron protein (274 aa).

8 to 15 (GKGGIGKS) is an ATP binding site. Cys-94 contacts [4Fe-4S] cluster. Position 97 is an ADP-ribosylarginine; by dinitrogenase reductase ADP-ribosyltransferase (Arg-97). Cys-129 contributes to the [4Fe-4S] cluster binding site.

This sequence belongs to the NifH/BchL/ChlL family. In terms of assembly, homodimer. The cofactor is [4Fe-4S] cluster. The reversible ADP-ribosylation of Arg-97 inactivates the nitrogenase reductase and regulates nitrogenase activity.

It carries out the reaction N2 + 8 reduced [2Fe-2S]-[ferredoxin] + 16 ATP + 16 H2O = H2 + 8 oxidized [2Fe-2S]-[ferredoxin] + 2 NH4(+) + 16 ADP + 16 phosphate + 6 H(+). The key enzymatic reactions in nitrogen fixation are catalyzed by the nitrogenase complex, which has 2 components: the iron protein and the molybdenum-iron protein. This Methanocella arvoryzae (strain DSM 22066 / NBRC 105507 / MRE50) protein is Nitrogenase iron protein.